An 845-amino-acid polypeptide reads, in one-letter code: Receptor-like protein Cf-9 homolog (845 aa).

Residues 1-19 (MGCVKLVFFMLLKLDLLEF) form the signal peptide. Residues 20–70 (KNMFTVNPNASDYCYDYTDQRMQSYPRTLFWNKSTDCCSWDGIHCDETTGQ) form an N-cap region. The Extracellular portion of the chain corresponds to 20–794 (KNMFTVNPNA…EEDSPMISWQ (775 aa)). 3 N-linked (GlcNAc...) asparagine glycosylation sites follow: asparagine 28, asparagine 51, and asparagine 88. Residues 71 to 94 (VVELDLRCSQLQGKFHSNSSLFQL) form an LRR 1; degenerate repeat. LRR repeat units lie at residues 95 to 118 (SNLK…KFGE), 119 to 143 (FSDL…ISHL), 144 to 171 (SKLH…LKNL), 172 to 193 (TQLR…SNFS), 194 to 217 (SHLT…VFHL), 219 to 242 (DLEF…KWNS), 244 to 266 (ASLM…SFSH), 267 to 291 (LTSL…LWNL), 292 to 316 (TNIE…RFEK), 318 to 338 (KRLS…SFNR), 340 to 364 (WTQL…VSGL), 365 to 388 (QNLG…IFSL), 390 to 410 (SLVV…EFKS), 411 to 434 (KTLS…LLNQ), 436 to 458 (SLQF…ICNL), 459 to 482 (KTLM…VGER), 484 to 506 (EYLL…TFSI), 507 to 531 (GNSF…LINC), 532 to 554 (KYLK…WLGY), 555 to 579 (LSQL…GSTN), 581 to 605 (FMRL…ILGN), 649 to 672 (LDSN…IIGD), 673 to 696 (LVGL…SFQN), 698 to 721 (SVLE…LASL), and 723 to 741 (FLEV…IPKG). N-linked (GlcNAc...) asparagine glycosylation is found at asparagine 131, asparagine 170, asparagine 183, and asparagine 191. N-linked (GlcNAc...) asparagine glycosylation is present at asparagine 241. 2 N-linked (GlcNAc...) asparagine glycosylation sites follow: asparagine 279 and asparagine 290. N-linked (GlcNAc...) asparagine glycans are attached at residues asparagine 337, asparagine 360, asparagine 378, and asparagine 398. Residue asparagine 446 is glycosylated (N-linked (GlcNAc...) asparagine). Asparagine 501 carries an N-linked (GlcNAc...) asparagine glycan. N-linked (GlcNAc...) asparagine glycosylation occurs at asparagine 545. N-linked (GlcNAc...) asparagine glycosylation is found at asparagine 656, asparagine 680, and asparagine 696. 2 N-linked (GlcNAc...) asparagine glycosylation sites follow: asparagine 728 and asparagine 749. Positions 742–794 (KQFDSFGNTSYQGNDGLRGFPLSKLCGVDDQVTTPAELDQEEEEEDSPMISWQ) are C-cap/acidic domain. A helical transmembrane segment spans residues 795–815 (GVLVGYGCGLVIGLSVIYIMW). The Cytoplasmic segment spans residues 816–845 (STQYPAWFSRMDLKLEHIITTRMKKHKKRY).

Belongs to the RLP family.

The protein localises to the cell membrane. Its function is as follows. At the opposite of its homolog Cf-9 found in S.pimpinellifolium, was not able to confer resistance to the fungal pathogen C.fulvum. The protein is Receptor-like protein Cf-9 homolog of Solanum lycopersicum (Tomato).